Here is a 227-residue protein sequence, read N- to C-terminus: UPF0173 metal-dependent hydrolase Bsph_4138 (227 aa).

Belongs to the UPF0173 family.

This chain is UPF0173 metal-dependent hydrolase Bsph_4138, found in Lysinibacillus sphaericus (strain C3-41).